Here is a 305-residue protein sequence, read N- to C-terminus: UDP-3-O-acyl-N-acetylglucosamine deacetylase (305 aa).

The Zn(2+) site is built by histidine 79, histidine 238, and aspartate 242. Histidine 265 serves as the catalytic Proton donor.

It belongs to the LpxC family. Requires Zn(2+) as cofactor.

The catalysed reaction is a UDP-3-O-[(3R)-3-hydroxyacyl]-N-acetyl-alpha-D-glucosamine + H2O = a UDP-3-O-[(3R)-3-hydroxyacyl]-alpha-D-glucosamine + acetate. It participates in glycolipid biosynthesis; lipid IV(A) biosynthesis; lipid IV(A) from (3R)-3-hydroxytetradecanoyl-[acyl-carrier-protein] and UDP-N-acetyl-alpha-D-glucosamine: step 2/6. Its function is as follows. Catalyzes the hydrolysis of UDP-3-O-myristoyl-N-acetylglucosamine to form UDP-3-O-myristoylglucosamine and acetate, the committed step in lipid A biosynthesis. This chain is UDP-3-O-acyl-N-acetylglucosamine deacetylase, found in Histophilus somni (strain 129Pt) (Haemophilus somnus).